Here is a 260-residue protein sequence, read N- to C-terminus: Phosphatidylglycerol--prolipoprotein diacylglyceryl transferase (260 aa).

4 consecutive transmembrane segments (helical) span residues 17-37 (VVKWYGIMMALGVIALVSWIF), 52-72 (LTAAIIAIPSGIIFSKLLHVI), 85-105 (ILSGEGLTIFGAIIGATIGLW), and 113-133 (FNLGYLLDVAVPGILLGQAIG). Position 134 (Arg-134) interacts with a 1,2-diacyl-sn-glycero-3-phospho-(1'-sn-glycerol). Helical transmembrane passes span 170 to 190 (VPTQAYEIIFLLCLFAFSLFI), 198 to 218 (GQLFLLYISLYAAWRVAIGFV), and 227 to 247 (GLEQAQVVGLILIALAVPFFI).

This sequence belongs to the Lgt family.

It is found in the cell membrane. It catalyses the reaction L-cysteinyl-[prolipoprotein] + a 1,2-diacyl-sn-glycero-3-phospho-(1'-sn-glycerol) = an S-1,2-diacyl-sn-glyceryl-L-cysteinyl-[prolipoprotein] + sn-glycerol 1-phosphate + H(+). It participates in protein modification; lipoprotein biosynthesis (diacylglyceryl transfer). Catalyzes the transfer of the diacylglyceryl group from phosphatidylglycerol to the sulfhydryl group of the N-terminal cysteine of a prolipoprotein, the first step in the formation of mature lipoproteins. The chain is Phosphatidylglycerol--prolipoprotein diacylglyceryl transferase from Dehalococcoides mccartyi (strain ATCC BAA-2266 / KCTC 15142 / 195) (Dehalococcoides ethenogenes (strain 195)).